Reading from the N-terminus, the 292-residue chain is Aquaporin-3 (292 aa).

Residues 1–24 lie on the Cytoplasmic side of the membrane; sequence MGRQKELVSRCGEMLHIRYRLLRQ. The helical transmembrane segment at 25-42 threads the bilayer; that stretch reads ALAECLGTLILVMFGCGS. Residues 43–56 lie on the Extracellular side of the membrane; it reads VAQVVLSRGTHGGF. A helical transmembrane segment spans residues 57–74; sequence LTINLAFGFAVTLGILIA. Topologically, residues 75 to 78 are cytoplasmic; that stretch reads GQVS. An intramembrane region (discontinuously helical) is located at residues 79–92; it reads GAHLNPAVTFAMCF. The NPA 1 motif lies at 83-85; sequence NPA. The Cytoplasmic portion of the chain corresponds to 93-100; the sequence is LAREPWIK. The helical transmembrane segment at 101-121 threads the bilayer; the sequence is LPIYTLAQTLGAFLGAGIVFG. The Extracellular portion of the chain corresponds to 122–159; sequence LYYDAIWHFADNQLFVSGPNGTAGIFATYPSGHLDMIN. Asparagine 141 carries an N-linked (GlcNAc...) asparagine glycan. Residues 160 to 177 traverse the membrane as a helical segment; sequence GFFDQFIGTASLIVCVLA. The Cytoplasmic portion of the chain corresponds to 178–189; that stretch reads IVDPYNNPVPRG. A helical membrane pass occupies residues 190–206; that stretch reads LEAFTVGLVVLVIGTSM. The Extracellular portion of the chain corresponds to 207–210; it reads GFNS. Positions 211-224 form an intramembrane region, discontinuously helical; it reads GYAVNPARDFGPRL. The NPA 2 motif lies at 215-217; sequence NPA. At 225-242 the chain is on the extracellular side; that stretch reads FTALAGWGSAVFTTGQHW. The helical transmembrane segment at 243 to 264 threads the bilayer; the sequence is WWVPIVSPLLGSIAGVFVYQLM. Topologically, residues 265-292 are cytoplasmic; that stretch reads IGCHLEQPPPSNEEENVKLAHVKHKEQI.

It belongs to the MIP/aquaporin (TC 1.A.8) family. In terms of assembly, homotetramer; each monomer provides an independent glycerol/water pore. Could also exist in other oligomeric states. Widely expressed in epithelial cells of kidney (collecting ducts) and airways, in keratinocytes, immature dendritic cells and erythrocytes. Isoform 2 is not detectable in erythrocytes at the protein level.

The protein localises to the cell membrane. Its subcellular location is the basolateral cell membrane. It carries out the reaction glycerol(in) = glycerol(out). It catalyses the reaction H2O(in) = H2O(out). The enzyme catalyses H2O2(out) = H2O2(in). The catalysed reaction is urea(in) = urea(out). Its activity is regulated as follows. Glycerol transport is regulated by pH, with the porin being permeable to glycerol at pH 7.4 but not at pH 5.5. Water permeability, however, is not influenced by pH. Functionally, aquaglyceroporins form homotetrameric transmembrane channels, with each monomer independently mediating glycerol and water transport across the plasma membrane along their osmotic gradient. Could also be permeable to urea. Also participates in cell permeability to H2O2 and H2O2-mediated signaling. In skin, transports glycerol to the epidermis and stratum corneum, where it maintains hydration, elasticity, and supports lipid biosynthesis for barrier repair. In kidney, contributes to the reabsorption of water, helping the body maintain proper fluid balance. The polypeptide is Aquaporin-3 (Homo sapiens (Human)).